The following is a 123-amino-acid chain: Small ribosomal subunit protein uS13 (123 aa).

The segment at 99–123 (RGQRTRTNARTRKGPRRTVGVKRKK) is disordered.

The protein belongs to the universal ribosomal protein uS13 family. Part of the 30S ribosomal subunit. Forms a loose heterodimer with protein S19. Forms two bridges to the 50S subunit in the 70S ribosome.

Functionally, located at the top of the head of the 30S subunit, it contacts several helices of the 16S rRNA. In the 70S ribosome it contacts the 23S rRNA (bridge B1a) and protein L5 of the 50S subunit (bridge B1b), connecting the 2 subunits; these bridges are implicated in subunit movement. Contacts the tRNAs in the A and P-sites. This chain is Small ribosomal subunit protein uS13, found in Carboxydothermus hydrogenoformans (strain ATCC BAA-161 / DSM 6008 / Z-2901).